A 165-amino-acid chain; its full sequence is Mating factor alpha-1 (165 aa).

Residues 1 to 19 (MRFPSIFTAVLFAASSALA) constitute a signal peptide (or 20). 4 consecutive propeptides follow at residues 20 to 89 (APVN…EAEA), 105 to 110 (EAEAEA), 126 to 131 (EADAEA), and 147 to 152 (EADAEA).

The active factor is excreted into the culture medium by haploid cells of the alpha mating type and acts on cells of the opposite mating type (type A). It mediates the conjugation process between the two types by inhibiting the initiation of DNA synthesis in type a cells and synchronizing them with type alpha. The chain is Mating factor alpha-1 (MF(ALPHA)1) from Saccharomyces cerevisiae (strain ATCC 204508 / S288c) (Baker's yeast).